The chain runs to 216 residues: Uracil phosphoribosyltransferase (216 aa).

CTP-binding positions include 29 to 30 (RK) and Arg-37. 30-34 (KNLVR) is a GTP binding site. A 5-phospho-alpha-D-ribose 1-diphosphate-binding site is contributed by Arg-80. 87-96 (EGLLKAFPKA) provides a ligand contact to CTP. 5-phospho-alpha-D-ribose 1-diphosphate contacts are provided by residues Arg-105 and 140-148 (DPMIATAST). Uracil contacts are provided by residues Ile-203 and 208–210 (GDA). Asp-209 contacts 5-phospho-alpha-D-ribose 1-diphosphate.

Belongs to the UPRTase family. Homotetramer. Requires Mg(2+) as cofactor.

It catalyses the reaction UMP + diphosphate = 5-phospho-alpha-D-ribose 1-diphosphate + uracil. The protein operates within pyrimidine metabolism; UMP biosynthesis via salvage pathway; UMP from uracil: step 1/1. Allosterically activated by GTP. Inhibited by CTP and UMP in combination. Catalyzes the conversion of uracil and 5-phospho-alpha-D-ribose 1-diphosphate (PRPP) to UMP and diphosphate. This Saccharolobus solfataricus (strain ATCC 35092 / DSM 1617 / JCM 11322 / P2) (Sulfolobus solfataricus) protein is Uracil phosphoribosyltransferase (upp).